The following is a 519-amino-acid chain: MVRAQRTKRASVTDIYKGCKASGTCPPDVLNKVEQNTLADKILKYGSVGVFFGGLGIGTGKGTGGATGYVPLRPGVRVGGTPTVVRPAVIPEIIGPTELIPVDSIAPIDPEAPSIVSLTDSGAAADLFPSEAETIAEVHPTPVDIGIDTPIVAGGRDAILEVVDTNPPTRFSVTRTQYDNPSFQIISESTPITGEASLADHVFVFEGSGGQHVGAVTEEIELDTYPSRYSFEIEEATPPRRTSTPIERISQEFRNLRRALYNRRLTEQVQVKNPLFLTTPSKLVRFQFDNPVFDEEVTQIFERDVAEVEEPPDRDFLDIDRLGRPLLTESTEGRIRLSRLGQRASIQTRSGTRVGSRVHFYTDLSTINTEEPIELELLGEHSGDASVIEEPLQSTVIDMNLDDVEAIQDTIDTADDYNSADLLLDNAIEEFNNSQLVFGTSDRSSSAYSIPRFESPRETIVYVQDIEGNQVIYPGPTERPTIIFPLPSAPAVVIHTLDKSFDYYLHPSLRKKRRKRKYL.

The Nuclear localization signal signature appears at 1–10 (MVRAQRTKRA). Cys19 and Cys25 are disulfide-bonded. Positions 511-518 (KKRRKRKY) match the Nuclear localization signal motif.

The protein belongs to the papillomaviridae L2 protein family. Interacts with major capsid protein L1. Interacts with E2; this interaction inhibits E2 transcriptional activity but not the DNA replication function E2. Interacts with host GADD45GIP1. Interacts with host HSPA8; this interaction is required for L2 nuclear translocation. Interacts with host importins KPNB2 and KPNB3. Forms a complex with importin alpha2-beta1 heterodimers via interaction with the importin alpha2 adapter. Interacts with host DYNLT1; this interaction is essential for virus intracellular transport during entry. Interacts (via C-terminus) with host retromer subunits VPS35 and VPS29. Post-translationally, highly phosphorylated.

It localises to the virion. Its subcellular location is the host nucleus. The protein resides in the host early endosome. It is found in the host Golgi apparatus. In terms of biological role, minor protein of the capsid that localizes along the inner surface of the virion, within the central cavities beneath the L1 pentamers. Plays a role in capsid stabilization through interaction with the major capsid protein L1. Once the virion enters the host cell, L2 escorts the genomic DNA into the nucleus by promoting escape from the endosomal compartments and traffic through the host Golgi network. Mechanistically, the C-terminus of L2 possesses a cell-penetrating peptide that protudes from the host endosome, interacts with host cytoplasmic retromer cargo and thereby mediates the capsid delivery to the host trans-Golgi network. Plays a role through its interaction with host dynein in the intracellular microtubule-dependent transport of viral capsid toward the nucleus. Mediates the viral genome import into the nucleus through binding to host importins. Once within the nucleus, L2 localizes viral genomes to host PML bodies in order to activate early gene expression for establishment of infection. Later on, promotes late gene expression by interacting with the viral E2 protein and by inhibiting its transcriptional activation functions. During virion assembly, encapsidates the genome by direct interaction with the viral DNA. The polypeptide is Minor capsid protein L2 (Homo sapiens (Human)).